The following is a 258-amino-acid chain: GTP cyclohydrolase FolE2 (258 aa).

It belongs to the GTP cyclohydrolase IV family.

It catalyses the reaction GTP + H2O = 7,8-dihydroneopterin 3'-triphosphate + formate + H(+). It functions in the pathway cofactor biosynthesis; 7,8-dihydroneopterin triphosphate biosynthesis; 7,8-dihydroneopterin triphosphate from GTP: step 1/1. In terms of biological role, converts GTP to 7,8-dihydroneopterin triphosphate. This is GTP cyclohydrolase FolE2 from Pseudothermotoga lettingae (strain ATCC BAA-301 / DSM 14385 / NBRC 107922 / TMO) (Thermotoga lettingae).